A 968-amino-acid polypeptide reads, in one-letter code: Isoleucine--tRNA ligase (968 aa).

The short motif at 68-78 (PYANGALHMGH) is the 'HIGH' region element. E584 contacts L-isoleucyl-5'-AMP. Positions 625–629 (KMSKS) match the 'KMSKS' region motif. K628 is a binding site for ATP. The Zn(2+) site is built by C938, C941, C958, and C961.

The protein belongs to the class-I aminoacyl-tRNA synthetase family. IleS type 1 subfamily. In terms of assembly, monomer. Requires Zn(2+) as cofactor.

It localises to the cytoplasm. The catalysed reaction is tRNA(Ile) + L-isoleucine + ATP = L-isoleucyl-tRNA(Ile) + AMP + diphosphate. Its function is as follows. Catalyzes the attachment of isoleucine to tRNA(Ile). As IleRS can inadvertently accommodate and process structurally similar amino acids such as valine, to avoid such errors it has two additional distinct tRNA(Ile)-dependent editing activities. One activity is designated as 'pretransfer' editing and involves the hydrolysis of activated Val-AMP. The other activity is designated 'posttransfer' editing and involves deacylation of mischarged Val-tRNA(Ile). The protein is Isoleucine--tRNA ligase of Synechococcus sp. (strain CC9311).